A 158-amino-acid chain; its full sequence is Large ribosomal subunit protein uL15 (158 aa).

Over residues 1-13 (MKLNEIKDNEGST) the composition is skewed to basic and acidic residues. Residues 1-45 (MKLNEIKDNEGSTHSRKRLGRGIGSGSGKTGGRGVKGQKSRSGVA) are disordered. Residues 21–35 (RGIGSGSGKTGGRGV) show a composition bias toward gly residues.

Belongs to the universal ribosomal protein uL15 family. Part of the 50S ribosomal subunit.

Functionally, binds to the 23S rRNA. The sequence is that of Large ribosomal subunit protein uL15 from Rhizobium johnstonii (strain DSM 114642 / LMG 32736 / 3841) (Rhizobium leguminosarum bv. viciae).